The primary structure comprises 255 residues: Pyrroloquinoline-quinone synthase (255 aa).

The protein belongs to the PqqC family.

The catalysed reaction is 6-(2-amino-2-carboxyethyl)-7,8-dioxo-1,2,3,4,7,8-hexahydroquinoline-2,4-dicarboxylate + 3 O2 = pyrroloquinoline quinone + 2 H2O2 + 2 H2O + H(+). The protein operates within cofactor biosynthesis; pyrroloquinoline quinone biosynthesis. Functionally, ring cyclization and eight-electron oxidation of 3a-(2-amino-2-carboxyethyl)-4,5-dioxo-4,5,6,7,8,9-hexahydroquinoline-7,9-dicarboxylic-acid to PQQ. The polypeptide is Pyrroloquinoline-quinone synthase (Acinetobacter baylyi (strain ATCC 33305 / BD413 / ADP1)).